The sequence spans 364 residues: Developmentally-regulated GTP-binding protein 2 (364 aa).

The residue at position 21 (Lys21) is a (3S)-3-hydroxylysine. One can recognise an OBG-type G domain in the interval Ala63–Ala288. GTP-binding positions include Gly69 to Ser76, Phe94 to Thr98, Asp115 to Gly118, Asn246 to Asp249, and Ser269 to Gly271. The Mg(2+) site is built by Ser76 and Thr96. Residues Ala288–Lys363 form the TGS domain.

It belongs to the TRAFAC class OBG-HflX-like GTPase superfamily. OBG GTPase family. Interacts with RWDD1; this interaction confers protection to polyubiquitination and proteolytic degradation. Interacts with JMJD7; this interaction is direct. Requires Mg(2+) as cofactor. Hydroxylated (with S stereochemistry) at C-3 of Lys-21 by JMJD7; this modification hinders trypsin-catalyzed proteolysis in vitro. Post-translationally, polyubiquitinated. As to expression, highest levels in skeletal muscle, heart and kidney. Low levels in colon, thymus, spleen, small intestine, lung and Leukocytes.

The protein resides in the nucleus. It is found in the cytoplasm. It catalyses the reaction GTP + H2O = GDP + phosphate + H(+). In terms of biological role, catalyzes the conversion of GTP to GDP through hydrolysis of the gamma-phosphate bond in GTP. When hydroxylated at C-3 of 'Lys-21' by JMJD7, may bind to RNA and play a role in translation. This chain is Developmentally-regulated GTP-binding protein 2, found in Homo sapiens (Human).